We begin with the raw amino-acid sequence, 246 residues long: UDP-N-acetyl-D-mannosaminuronic acid transferase (246 aa).

This sequence belongs to the glycosyltransferase 26 family.

It catalyses the reaction UDP-N-acetyl-alpha-D-mannosaminouronate + N-acetyl-alpha-D-glucosaminyl-di-trans,octa-cis-undecaprenyl diphosphate = beta-D-ManNAcA-(1-&gt;4)-alpha-D-GlcNAc-di-trans,octa-cis-undecaprenyl diphosphate + UDP + H(+). The protein operates within bacterial outer membrane biogenesis; enterobacterial common antigen biosynthesis. In terms of biological role, catalyzes the synthesis of Und-PP-GlcNAc-ManNAcA (Lipid II), the second lipid-linked intermediate involved in enterobacterial common antigen (ECA) synthesis. The chain is UDP-N-acetyl-D-mannosaminuronic acid transferase from Salmonella schwarzengrund (strain CVM19633).